A 386-amino-acid chain; its full sequence is F420 non-reducing hydrogenase II small subunit (386 aa).

Positions 1–51 (MVEMSTGMKNLTRTLESMDFLKMDRRTFMKAVSALGATAFLGTYQTEIVNA) form a signal peptide, tat-type signal. Residues cysteine 67, cysteine 70, cysteine 178, cysteine 227, histidine 273, cysteine 276, cysteine 296, and cysteine 302 each contribute to the [4Fe-4S] cluster site. [3Fe-4S] cluster contacts are provided by cysteine 311, cysteine 330, and cysteine 333.

It belongs to the [NiFe]/[NiFeSe] hydrogenase small subunit family. Composed of a large subunit (VhtA), a small subunit (VhtG) and a cytochrome subunit (VhtC). Requires [4Fe-4S] cluster as cofactor. [3Fe-4S] cluster is required as a cofactor. In terms of processing, predicted to be exported by the Tat system. The position of the signal peptide cleavage has not been experimentally proven.

Its subcellular location is the cell membrane. It carries out the reaction methanophenazine + H2 = dihydromethanophenazine. Its function is as follows. Part of the F420 non-reducing hydrogenase II complex that catalyzes the reduction of methanophenazine to dihydromethanophenazine. The protein is F420 non-reducing hydrogenase II small subunit of Methanosarcina mazei (strain ATCC BAA-159 / DSM 3647 / Goe1 / Go1 / JCM 11833 / OCM 88) (Methanosarcina frisia).